The sequence spans 361 residues: Probable dual-specificity RNA methyltransferase RlmN (361 aa).

Residue E99 is the Proton acceptor of the active site. One can recognise a Radical SAM core domain in the interval 105-342 (GPNRMTACVS…VTIRKSYGTP (238 aa)). An intrachain disulfide couples C112 to C347. Positions 119, 123, and 126 each coordinate [4Fe-4S] cluster. Residues 171–172 (GE), S204, 227–229 (SLH), and N304 each bind S-adenosyl-L-methionine. C347 (S-methylcysteine intermediate) is an active-site residue.

It belongs to the radical SAM superfamily. RlmN family. [4Fe-4S] cluster is required as a cofactor.

The protein resides in the cytoplasm. The enzyme catalyses adenosine(2503) in 23S rRNA + 2 reduced [2Fe-2S]-[ferredoxin] + 2 S-adenosyl-L-methionine = 2-methyladenosine(2503) in 23S rRNA + 5'-deoxyadenosine + L-methionine + 2 oxidized [2Fe-2S]-[ferredoxin] + S-adenosyl-L-homocysteine. The catalysed reaction is adenosine(37) in tRNA + 2 reduced [2Fe-2S]-[ferredoxin] + 2 S-adenosyl-L-methionine = 2-methyladenosine(37) in tRNA + 5'-deoxyadenosine + L-methionine + 2 oxidized [2Fe-2S]-[ferredoxin] + S-adenosyl-L-homocysteine. Functionally, specifically methylates position 2 of adenine 2503 in 23S rRNA and position 2 of adenine 37 in tRNAs. The protein is Probable dual-specificity RNA methyltransferase RlmN of Chlorobium luteolum (strain DSM 273 / BCRC 81028 / 2530) (Pelodictyon luteolum).